The chain runs to 254 residues: 14-3-3-like protein RA215 (254 aa).

The protein belongs to the 14-3-3 family.

This chain is 14-3-3-like protein RA215, found in Solanum tuberosum (Potato).